Reading from the N-terminus, the 160-residue chain is MVKKNSKKAAQPATIARNKRATFEYKFDEKFEAGLSLMGWEVKSIRAGKINISESYVMLKNGEAFLHHCHITPLHAASTHVVCDPTRPRKLLLNRRELDRLAGLVERQGYAIVPISMYWRKGAWVKVEIGLGKGKKAHDKRDDIKQRDWDIEKARVMKNK.

It belongs to the SmpB family.

The protein localises to the cytoplasm. Required for rescue of stalled ribosomes mediated by trans-translation. Binds to transfer-messenger RNA (tmRNA), required for stable association of tmRNA with ribosomes. tmRNA and SmpB together mimic tRNA shape, replacing the anticodon stem-loop with SmpB. tmRNA is encoded by the ssrA gene; the 2 termini fold to resemble tRNA(Ala) and it encodes a 'tag peptide', a short internal open reading frame. During trans-translation Ala-aminoacylated tmRNA acts like a tRNA, entering the A-site of stalled ribosomes, displacing the stalled mRNA. The ribosome then switches to translate the ORF on the tmRNA; the nascent peptide is terminated with the 'tag peptide' encoded by the tmRNA and targeted for degradation. The ribosome is freed to recommence translation, which seems to be the essential function of trans-translation. In Shewanella amazonensis (strain ATCC BAA-1098 / SB2B), this protein is SsrA-binding protein.